The chain runs to 144 residues: Grifin (144 aa).

One can recognise a Galectin domain in the interval 5–133; it reads FEAFCAGGLA…EHRLAQVELA (129 aa). Ser138 carries the post-translational modification Phosphoserine.

As to quaternary structure, homodimer.

The sequence is that of Grifin (Grifin) from Mus musculus (Mouse).